The following is a 464-amino-acid chain: Soluble pyridine nucleotide transhydrogenase (464 aa).

Residue 35–44 participates in FAD binding; that stretch reads DSRRQVGGNC.

This sequence belongs to the class-I pyridine nucleotide-disulfide oxidoreductase family. Requires FAD as cofactor.

It is found in the cytoplasm. The catalysed reaction is NAD(+) + NADPH = NADH + NADP(+). Functionally, conversion of NADPH, generated by peripheral catabolic pathways, to NADH, which can enter the respiratory chain for energy generation. The sequence is that of Soluble pyridine nucleotide transhydrogenase from Pseudomonas syringae pv. syringae (strain B728a).